The chain runs to 304 residues: Large ribosomal subunit protein uL18y (304 aa).

It belongs to the universal ribosomal protein uL18 family. Component of the large ribosomal subunit (LSU).

The protein resides in the cytoplasm. Its subcellular location is the nucleus. Its function is as follows. Component of the ribosome, a large ribonucleoprotein complex responsible for the synthesis of proteins in the cell. The small ribosomal subunit (SSU) binds messenger RNAs (mRNAs) and translates the encoded message by selecting cognate aminoacyl-transfer RNA (tRNA) molecules. The large subunit (LSU) contains the ribosomal catalytic site termed the peptidyl transferase center (PTC), which catalyzes the formation of peptide bonds, thereby polymerizing the amino acids delivered by tRNAs into a polypeptide chain. The nascent polypeptides leave the ribosome through a tunnel in the LSU and interact with protein factors that function in enzymatic processing, targeting, and the membrane insertion of nascent chains at the exit of the ribosomal tunnel. The polypeptide is Large ribosomal subunit protein uL18y (RPL5B) (Oryza sativa subsp. japonica (Rice)).